The primary structure comprises 96 residues: U6 snRNA-associated Sm-like protein LSm8 (96 aa).

The Sm domain occupies 1–76 (MTSALENYIN…VAVIGEIDEE (76 aa)). Threonine 2 carries the N-acetylthreonine modification.

Belongs to the snRNP Sm proteins family. In terms of assembly, component of the precatalytic spliceosome (spliceosome B complex). Component of the U4/U6-U5 tri-snRNP complex, a building block of the precatalytic spliceosome (spliceosome B complex). The U4/U6-U5 tri-snRNP complex is composed of the U4, U6 and U5 snRNAs and at least PRPF3, PRPF4, PRPF6, PRPF8, PRPF31, SNRNP200, TXNL4A, SNRNP40, SNRPB, SNRPD1, SNRPD2, SNRPD3, SNRPE, SNRPF, SNRPG, DDX23, CD2BP2, PPIH, SNU13, EFTUD2, SART1 and USP39, plus LSM2, LSM3, LSM4, LSM5, LSM6, LSM7 and LSM8. LSM2, LSM3, LSM4, LSM5, LSM6, LSM7 and LSM8 form a heptameric, ring-shaped subcomplex (the LSM2-8 complex) that is part of the U4/U6-U5 tri-snRNP complex and the precatalytic spliceosome.

The protein resides in the nucleus. Its function is as follows. Plays a role in pre-mRNA splicing as component of the U4/U6-U5 tri-snRNP complex that is involved in spliceosome assembly, and as component of the precatalytic spliceosome (spliceosome B complex). The heptameric LSM2-8 complex binds specifically to the 3'-terminal U-tract of U6 snRNA. The protein is U6 snRNA-associated Sm-like protein LSm8 (LSM8) of Bos taurus (Bovine).